The chain runs to 141 residues: Phage-like element PBSX protein XkdS (141 aa).

It to B.subtilis YqbS.

This Bacillus subtilis (strain 168) protein is Phage-like element PBSX protein XkdS (xkdS).